A 664-amino-acid chain; its full sequence is Bifunctional 3-dehydroquinate synthase/phosphatase (664 aa).

A 3-dehydroquinate synthase region spans residues 1-352 (MKKIFDDIYV…KIIDKYKNNF (352 aa)). NAD(+) is bound by residues 61–66 (DGEEYK), 95–99 (GVICD), 119–120 (TS), lysine 132, lysine 141, and 159–162 (FLKT). The Zn(2+) site is built by glutamate 174, histidine 238, and histidine 255. The segment at 353-664 (LRASIDIGTN…GAILEGVENK (312 aa)) is GPPA/PPX.

This sequence in the N-terminal section; belongs to the sugar phosphate cyclases superfamily. Dehydroquinate synthase family. It in the C-terminal section; belongs to the GppA/Ppx family. Monomer. NAD(+) serves as cofactor. Requires Co(2+) as cofactor. It depends on Zn(2+) as a cofactor.

The protein localises to the cytoplasm. The enzyme catalyses 7-phospho-2-dehydro-3-deoxy-D-arabino-heptonate = 3-dehydroquinate + phosphate. It participates in metabolic intermediate biosynthesis; chorismate biosynthesis; chorismate from D-erythrose 4-phosphate and phosphoenolpyruvate: step 2/7. In Fusobacterium nucleatum subsp. nucleatum (strain ATCC 25586 / DSM 15643 / BCRC 10681 / CIP 101130 / JCM 8532 / KCTC 2640 / LMG 13131 / VPI 4355), this protein is Bifunctional 3-dehydroquinate synthase/phosphatase (aroB).